The chain runs to 239 residues: Serine protease SplC (239 aa).

The signal sequence occupies residues 1-36 (MNKNIVIKSMAALAILTSVTGINAAVVEETQQIANA). Active-site charge relay system residues include His-75, Asp-113, and Ser-193.

It belongs to the peptidase S1B family.

Its subcellular location is the secreted. In Staphylococcus aureus (strain MW2), this protein is Serine protease SplC (splC).